Consider the following 449-residue polypeptide: XK-related protein 2 (449 aa).

Helical transmembrane passes span 35–55 (FSIL…LYMV), 68–88 (TYTF…LIFV), 98–118 (LSLF…EAMI), 174–194 (IQAF…SLIS), 202–222 (VVLM…CNML), 241–261 (LCIT…LVLF), 269–289 (AVPF…IKFW), 306–326 (VGTL…NFSC), 357–377 (LVEN…VLLN), and 382–402 (LIAL…LLFF).

The protein belongs to the XK family. In terms of tissue distribution, expressed predominantly in the placenta, in syncytiotrophoblasts. Moderate levels in the adrenal gland, low levels in the trachea and very low levels in the bone marrow.

It is found in the cell membrane. This chain is XK-related protein 2 (XKRX), found in Homo sapiens (Human).